The following is a 213-amino-acid chain: Orotate phosphoribosyltransferase (213 aa).

A 5-phospho-alpha-D-ribose 1-diphosphate-binding site is contributed by Lys-26. Position 34–35 (34–35 (FF)) interacts with orotate. 5-phospho-alpha-D-ribose 1-diphosphate contacts are provided by residues 72–73 (YK), Arg-99, Lys-100, Lys-103, His-105, and 124–132 (DDVITAGTA). Positions 128 and 156 each coordinate orotate.

Belongs to the purine/pyrimidine phosphoribosyltransferase family. PyrE subfamily. As to quaternary structure, homodimer. Requires Mg(2+) as cofactor.

It carries out the reaction orotidine 5'-phosphate + diphosphate = orotate + 5-phospho-alpha-D-ribose 1-diphosphate. It functions in the pathway pyrimidine metabolism; UMP biosynthesis via de novo pathway; UMP from orotate: step 1/2. Its function is as follows. Catalyzes the transfer of a ribosyl phosphate group from 5-phosphoribose 1-diphosphate to orotate, leading to the formation of orotidine monophosphate (OMP). This chain is Orotate phosphoribosyltransferase, found in Salmonella typhi.